A 265-amino-acid polypeptide reads, in one-letter code: 3-methyl-2-oxobutanoate hydroxymethyltransferase (265 aa).

The Mg(2+) site is built by Asp-44 and Asp-83. 3-methyl-2-oxobutanoate is bound by residues Asp-44 to Ser-45, Asp-83, and Lys-113. Glu-115 lines the Mg(2+) pocket. Glu-182 acts as the Proton acceptor in catalysis.

Belongs to the PanB family. In terms of assembly, homodecamer; pentamer of dimers. The cofactor is Mg(2+).

It localises to the cytoplasm. It catalyses the reaction 3-methyl-2-oxobutanoate + (6R)-5,10-methylene-5,6,7,8-tetrahydrofolate + H2O = 2-dehydropantoate + (6S)-5,6,7,8-tetrahydrofolate. The protein operates within cofactor biosynthesis; (R)-pantothenate biosynthesis; (R)-pantoate from 3-methyl-2-oxobutanoate: step 1/2. Functionally, catalyzes the reversible reaction in which hydroxymethyl group from 5,10-methylenetetrahydrofolate is transferred onto alpha-ketoisovalerate to form ketopantoate. The protein is 3-methyl-2-oxobutanoate hydroxymethyltransferase of Aquifex aeolicus (strain VF5).